We begin with the raw amino-acid sequence, 101 residues long: NADH-quinone oxidoreductase subunit K (101 aa).

3 helical membrane-spanning segments follow: residues 4 to 24 (LADY…GIFI), 30 to 50 (LVLL…FIAF), and 61 to 81 (VFVF…LAIV).

It belongs to the complex I subunit 4L family. In terms of assembly, NDH-1 is composed of 14 different subunits. Subunits NuoA, H, J, K, L, M, N constitute the membrane sector of the complex.

The protein resides in the cell inner membrane. It carries out the reaction a quinone + NADH + 5 H(+)(in) = a quinol + NAD(+) + 4 H(+)(out). Functionally, NDH-1 shuttles electrons from NADH, via FMN and iron-sulfur (Fe-S) centers, to quinones in the respiratory chain. The immediate electron acceptor for the enzyme in this species is believed to be ubiquinone. Couples the redox reaction to proton translocation (for every two electrons transferred, four hydrogen ions are translocated across the cytoplasmic membrane), and thus conserves the redox energy in a proton gradient. The chain is NADH-quinone oxidoreductase subunit K from Alkalilimnicola ehrlichii (strain ATCC BAA-1101 / DSM 17681 / MLHE-1).